The primary structure comprises 193 residues: Acyl carrier protein phosphodiesterase (193 aa).

The protein belongs to the AcpH family.

It catalyses the reaction holo-[ACP] + H2O = apo-[ACP] + (R)-4'-phosphopantetheine + H(+). Functionally, converts holo-ACP to apo-ACP by hydrolytic cleavage of the phosphopantetheine prosthetic group from ACP. The polypeptide is Acyl carrier protein phosphodiesterase (Shigella boydii serotype 18 (strain CDC 3083-94 / BS512)).